We begin with the raw amino-acid sequence, 355 residues long: C-C chemokine receptor type 1 (355 aa).

Residues 1-34 (METPNTTEDYDTTTEFDYGDATPCQKVNERAFGA) lie on the Extracellular side of the membrane. An N-linked (GlcNAc...) asparagine glycan is attached at asparagine 5. Disulfide bonds link cysteine 24/cysteine 273 and cysteine 106/cysteine 183. The helical transmembrane segment at 35 to 60 (QLLPPLYSLVFVIGLVGNILVVLVLV) threads the bilayer. Residues 61 to 64 (QYKR) lie on the Cytoplasmic side of the membrane. Residues 65–91 (LKNMTSIYLLNLAISDLLFLFTLPFWI) traverse the membrane as a helical segment. Over 92–107 (DYKLKDDWVFGDAMCK) the chain is Extracellular. Residues 108–129 (ILSGFYYTGLYSEIFFIILLTI) traverse the membrane as a helical segment. At 130–146 (DRYLAIVHAVFALRART) the chain is on the cytoplasmic side. The chain crosses the membrane as a helical span at residues 147 to 171 (VTFGVITSIIIWALAILASMPGLYF). The Extracellular segment spans residues 172–197 (SKTQWEFTHHTCSLHFPHESLREWKL). Residues 198–223 (FQALKLNLFGLVLPLLVMIICYTGII) traverse the membrane as a helical segment. Over 224–239 (KILLRRPNEKKSKAVR) the chain is Cytoplasmic. Residues 240 to 264 (LIFVIMIIFFLFWTPYNLTILISVF) traverse the membrane as a helical segment. At 265–281 (QDFLFTHECEQSRHLDL) the chain is on the extracellular side. The chain crosses the membrane as a helical span at residues 282 to 305 (AVQVTEVIAYTHCCVNPVIYAFVG). Residues 306-355 (ERFRKYLRQLFHRRVAVHLVKWLPFLSVDRLERVSSTSPSTGEHELSAGF) lie on the Cytoplasmic side of the membrane.

Belongs to the G-protein coupled receptor 1 family. As to quaternary structure, interacts with CREB3. Interacts with CCL3. Interacts with CCL15. Interacts with CCL23. Interacts with GNAI1. Interacts with PF4/CXCL4. As to expression, widely expressed in different hematopoietic cells.

Its subcellular location is the cell membrane. Its function is as follows. Chemokine receptor that plays a crucial role in regulating immune cell migration, inflammation, and immune responses. Contributes to the inflammatory response by recruiting immune cells, such as monocytes, macrophages, T-cells, and dendritic cells, to sites of inflammation for the clearance of pathogens and the resolution of tissue damage. When activated by its ligands including CCL3, CCL5-9, CCL13-16 and CCL23, triggers a signaling cascade within immune cells, leading to their migration towards the source of the chemokine. For example, mediates neutrophil migration after activation by CCL3 leading to the sequential release of TNF-alpha and leukotriene B4. Also mediates monocyte migration upon CXCL4 binding. Activation by CCL5 results in neuroinflammation through the ERK1/2 signaling pathway. The sequence is that of C-C chemokine receptor type 1 (CCR1) from Homo sapiens (Human).